A 440-amino-acid polypeptide reads, in one-letter code: Chromosome partition protein MukF (440 aa).

The segment at 208-236 (LSETSGTLRELQDTLDAAGDKLQANLLRI) is leucine-zipper.

It belongs to the MukF family. In terms of assembly, interacts, and probably forms a ternary complex, with MukE and MukB via its C-terminal region. The complex formation is stimulated by calcium or magnesium. It is required for an interaction between MukE and MukB.

It is found in the cytoplasm. It localises to the nucleoid. Functionally, involved in chromosome condensation, segregation and cell cycle progression. May participate in facilitating chromosome segregation by condensation DNA from both sides of a centrally located replisome during cell division. Not required for mini-F plasmid partitioning. Probably acts via its interaction with MukB and MukE. Overexpression results in anucleate cells. It has a calcium binding activity. The protein is Chromosome partition protein MukF of Klebsiella pneumoniae subsp. pneumoniae (strain ATCC 700721 / MGH 78578).